A 933-amino-acid polypeptide reads, in one-letter code: MSMSSRHLHSSIVNPPPPEYINRKKTGRLTNQLQYLEKVVLKALWRHHFSWPFQQPVDAAKLNLPDYYQIIKNPMDLSTIRKRLEYNYYSKALDCIQDFNTMFTNCYIYNKPGDDIVVMSQELEKVFMEKIAEMPHEEIELSVVGNRGVKSRIKISAVAAEVCKKKMVSQKMHRRTFPCPVIAMMPKRTTLVPLSVIRSSTSSHSASSVSKVNKGIKRKADTTTPAVSLIATSCESSPTLSEPKPNKILSGTEKTRSAETSAVDLPDSQHHIHFIKSNQICEQLKHCNNILNEMMSKKHAEYAWPFYKTVIPTSLLDCSDAIKHPMDLATIRDKMENGLYKDTQDFASDVRLMFMNSYKYNPPDNEVVNMARKMQDVFEGMFAKIPDDPLATQSMVERYKTSTEESSSSSSSEQSSSSDSEDERAQHLALLQEQLRAVQEQLKALTETPIFSKIQPKSAVGVYDKYKQWVKCIEPMGKLLKRKKNYDAKKKKLHVSDEEEDVKPMSYDEKRQLSLDINKLPGEKLGRIVHIIQSREPSLKDSNPNEIEIDFETLKQSTLRHLEKYVMVCLRKRPKKPSSIKSLKSKEQLNKEKKQELEKRLRDVSGQLSSAKKPKIQGFLYPMQSIGGPSRLSESSTSSSASDVSNSSDSSSSDSSDSESATFPKNILAKKQTSTNYEVPLLLYYGCFVNKPRTSIPQNGLCIGSQSLAYTTISTIVHPTPMALMPLHPGSTNYTSLQLLLKYGLHVPLIIENPLGNSVLFENYLEVLHPSQIEQTFAIKEECLKPKYKNAKVKTSFCWEVFSKSLATTHVTIKSSSNSFQQFRKAAIAKEERERALKAQELRRLEDSKAGMQEKLSPSLPMETKVHEMQAQTIDEATKGEPTCNPVHEGITEEERNLARMREQERRRREAMAGTIDMYLQSDIMATFEEHLC.

Residues 1 to 21 (MSMSSRHLHSSIVNPPPPEYI) form a disordered region. The Bromo 1 domain occupies 28 to 134 (RLTNQLQYLE…KVFMEKIAEM (107 aa)). Residues 214–225 (KGIKRKADTTTP) carry the Nuclear localization signal motif. Positions 235-263 (ESSPTLSEPKPNKILSGTEKTRSAETSAV) are disordered. One can recognise a Bromo 2 domain in the interval 278-385 (NQICEQLKHC…DVFEGMFAKI (108 aa)). Disordered regions lie at residues 398–425 (RYKT…DERA), 576–610 (KPSS…QLSS), and 627–662 (GGPS…ESAT). Residues 404 to 418 (EESSSSSSSEQSSSS) are compositionally biased toward low complexity. Positions 423 to 448 (ERAQHLALLQEQLRAVQEQLKALTET) form a coiled coil. One can recognise an NET domain in the interval 495 to 577 (VSDEEEDVKP…VCLRKRPKKP (83 aa)). Positions 584 to 603 (KSKEQLNKEKKQELEKRLRD) are enriched in basic and acidic residues. Positions 630–660 (SRLSESSTSSSASDVSNSSDSSSSDSSDSES) are enriched in low complexity. A coiled-coil region spans residues 829–917 (AKEERERALK…RREAMAGTID (89 aa)).

The protein belongs to the BET family.

The protein localises to the nucleus. Its function is as follows. Testis-specific chromatin protein that specifically binds histone H4 acetylated at 'Lys-5' and 'Lys-8' (H4K5ac and H4K8ac, respectively) and plays a key role in spermatogenesis. Required in late pachytene spermatocytes: plays a role in meiotic and post-meiotic cells by binding to acetylated histones at the promoter of specific meiotic and post-meiotic genes, facilitating their activation at the appropriate time. In the post-meiotic phase of spermatogenesis, binds to hyperacetylated histones and participates in their general removal from DNA. Also recognizes and binds a subset of butyrylated histones: able to bind histone H4 butyrylated at 'Lys-8' (H4K8ac), while it is not able to bind H4 butyrylated at 'Lys-5' (H4K5ac). The sequence is that of Bromodomain testis-specific protein (brdt) from Xenopus tropicalis (Western clawed frog).